The chain runs to 375 residues: tRNA-specific 2-thiouridylase MnmA (375 aa).

ATP contacts are provided by residues 12–19 (GMSGGVDS) and Met-38. The tract at residues 98–100 (NPD) is interaction with target base in tRNA. Residue Cys-103 is the Nucleophile of the active site. Cys-103 and Cys-200 form a disulfide bridge. Gly-127 lines the ATP pocket. The tract at residues 150–152 (KDQ) is interaction with tRNA. Catalysis depends on Cys-200, which acts as the Cysteine persulfide intermediate. The segment at 312 to 313 (RY) is interaction with tRNA.

Belongs to the MnmA/TRMU family.

It localises to the cytoplasm. It carries out the reaction S-sulfanyl-L-cysteinyl-[protein] + uridine(34) in tRNA + AH2 + ATP = 2-thiouridine(34) in tRNA + L-cysteinyl-[protein] + A + AMP + diphosphate + H(+). In terms of biological role, catalyzes the 2-thiolation of uridine at the wobble position (U34) of tRNA, leading to the formation of s(2)U34. This Lactobacillus johnsonii (strain CNCM I-12250 / La1 / NCC 533) protein is tRNA-specific 2-thiouridylase MnmA.